Consider the following 640-residue polypeptide: Protein ALTERED PHOSPHATE STARVATION RESPONSE 1 (640 aa).

Positions 60–175 (TPLHLHHNPP…ATPQASSVVS (116 aa)) are disordered. Residues 68 to 87 (PPSPSPPPPPPPRPPPPPLS) are compositionally biased toward pro residues. Over residues 88-103 (PGSETTTWTTTTTSSV) the composition is skewed to low complexity. Over residues 104 to 118 (LPPPPPPPPPPPPPS) the composition is skewed to pro residues. Residues 144–173 (TTATRTATGTGSDAAVTTAPTTATPQASSV) show a composition bias toward low complexity. Positions 336–371 (KTEKAKKDVEKLESQLSVSSQAIQSASNEIIKLRET) form a coiled coil.

In terms of tissue distribution, expressed in the root tip of primary and lateral roots, specifically in the meristematic region, including the quiescent center and lateral root cap cells.

It localises to the nucleus. In terms of biological role, required for the coordination of cell differentiation and cell elongation in the root tip. Required for the coordination of cell processes necessary for correct root growth in response to phosphate starvation, through the modulation of the auxin transporter protein PIN7. The protein is Protein ALTERED PHOSPHATE STARVATION RESPONSE 1 of Arabidopsis thaliana (Mouse-ear cress).